The primary structure comprises 858 residues: DNA mismatch repair protein MutS (858 aa).

Residue 618–625 (GPNMGGKS) coordinates ATP.

It belongs to the DNA mismatch repair MutS family.

In terms of biological role, this protein is involved in the repair of mismatches in DNA. It is possible that it carries out the mismatch recognition step. This protein has a weak ATPase activity. The chain is DNA mismatch repair protein MutS from Shewanella woodyi (strain ATCC 51908 / MS32).